The following is a 434-amino-acid chain: MSFNTIIDWNSCTAEQQRQLLMRPAISASESITRTVNDILDNVKARGDEALREYSAKFDKTTVTALKVSAEEIAAASERLSDELKQAMAVAVKNIETFHTAQKLPPVDVETQPGVRCQQVTRPVASVGLYIPGGSAPLFSTVLMLATPASIAGCKKVVLCSPPPIADEILYAAQLCGVQDVFNVGGAQAIAALAFGTESVPKVDKIFGPGNAFVTEAKRQVSQRLDGAAIDMPAGPSEVLVIADSGATPDFVASDLLSQAEHGPDSQVILLTPAADMARRVAEAVERQLAELPRAETARQALNASRLIVTKDLAQCVEISNQYGPEHLIIQTRNARELVDSITSAGSVFLGDWSPESAGDYASGTNHVLPTYGYTATCSSLGLADFQKRMTVQELSKEGFSALASTIETLAAAERLTAHKNAVTLRVNALKEQA.

The NAD(+) site is built by tyrosine 130, glutamine 188, and asparagine 211. Substrate is bound by residues serine 237, glutamine 259, and histidine 262. Zn(2+) contacts are provided by glutamine 259 and histidine 262. Residues glutamate 326 and histidine 327 each act as proton acceptor in the active site. Residues histidine 327, aspartate 360, glutamate 414, and histidine 419 each contribute to the substrate site. Aspartate 360 contributes to the Zn(2+) binding site. Histidine 419 contributes to the Zn(2+) binding site.

This sequence belongs to the histidinol dehydrogenase family. Homodimer. Requires Zn(2+) as cofactor.

The enzyme catalyses L-histidinol + 2 NAD(+) + H2O = L-histidine + 2 NADH + 3 H(+). The protein operates within amino-acid biosynthesis; L-histidine biosynthesis; L-histidine from 5-phospho-alpha-D-ribose 1-diphosphate: step 9/9. Catalyzes the sequential NAD-dependent oxidations of L-histidinol to L-histidinaldehyde and then to L-histidine. The protein is Histidinol dehydrogenase of Escherichia coli (strain K12).